The chain runs to 86 residues: uncharacterized protein (86 aa).

TPR repeat units follow at residues 8 to 41 (AEYY…NPFY) and 42 to 75 (RDAW…EKHL).

This is an uncharacterized protein from Methanocaldococcus jannaschii (strain ATCC 43067 / DSM 2661 / JAL-1 / JCM 10045 / NBRC 100440) (Methanococcus jannaschii).